The sequence spans 799 residues: MAKSGSLSIRVVEGRALPAKDVSGSSDPYCLVKVDDQVVARTATIWRSLSPFWGEEYTVHLPLDFHHLAFYVLDEDTVGHDDIIGKISLSKEAITADPRGIDSWINLSRVDPDAEVQGEVCLDVKLLEDARGRCLRCHVRQARDLAPRDISGTSDPFARVFWGNHSLETSTIKKTRFPHWDEVLELREAPGTTSPLRVELWDWDMVGKNDFLGMVEFTPQTLQQKPPNGWFRLLPFPRAEDSGGSLGALRLKVRLTEDRVLPSQYYQPLMELLLESVQGPAEEDTTSPLALLEELASGDCRQDLATKLVKLFLGRGLAGPFLDYLTRREVARTNDPNTLFRSNSLASKSMEQFMKLVGMRYLHEVLRPVISRVFEEKKYMELDPCKMDLNRSRRISFKGTPTEEQVRETSLGLLTGYLGSVVDAIVSSTGRCPLALRLAFKQLQRCVEKRFSGIEHQDVKYLAISGFLFLRFFAPAILTPKLFDLRDQHADPQTSRSLLLLAKAVQSIGNLGQQLGQGKEQWLAPLHPFLLQSISRVRDFLDQLVDVDEDEEAGGPACALVQPSTIVREGFLLKRKEEPGGLATRFAFKKRYFRLSGRDLSYSKTPEWQVHTSIPLSCIRAVEHVDEGAFQLPHVMQVVTQDGAGTSHTTYLQCKNVNDLNQWLSALRKASAPNPGKLVACHPGAFRSGRWTCCLQAERSAAGCSRTHSAITLGDWSDPLDPDAEAQAVYRQLLLGRDQLRLKLLEDSSLDTEVDPGRDSSATDGPCAEVLAQQRAATTHLLQVLEDLEQAHEEFQKRG.

C2 domains are found at residues 1–105 (MAKS…DSWI) and 116–231 (VQGE…NGWF). Ca(2+) is bound by residues Asp-21, Asp-27, Asp-74, Asp-76, Asp-82, Asp-149, Asp-155, Asp-202, Asp-204, and Asp-210. The region spanning 316-544 (GLAGPFLDYL…SRVRDFLDQL (229 aa)) is the Ras-GAP domain. Phosphothreonine is present on Thr-400. In terms of domain architecture, PH spans 565-672 (TIVREGFLLK…WLSALRKASA (108 aa)). Residues 674–710 (NPGKLVACHPGAFRSGRWTCCLQAERSAAGCSRTHSA) form a Btk-type zinc finger. Residues His-682, Cys-693, Cys-694, and Cys-704 each coordinate Zn(2+).

It depends on Ca(2+) as a cofactor.

Its function is as follows. Probable inhibitory regulator of the Ras-cyclic AMP pathway. Plays a role in dendrite formation by melanocytes. This chain is RasGAP-activating-like protein 1, found in Mus musculus (Mouse).